We begin with the raw amino-acid sequence, 427 residues long: Kallistatin (427 aa).

A signal peptide spans 1–20 (MHLIDYLLLLLVGLLALSHG). N-linked (GlcNAc...) asparagine glycans are attached at residues Asn-33, Asn-108, and Asn-157. Asn-238 carries N-linked (GlcNAc...) (complex) asparagine glycosylation.

Belongs to the serpin family. Monomer and some homodimers. In terms of processing, the N-terminus is blocked. In terms of tissue distribution, expressed by the liver and secreted in plasma.

It localises to the secreted. Functionally, inhibits human amidolytic and kininogenase activities of tissue kallikrein. Inhibition is achieved by formation of an equimolar, heat- and SDS-stable complex between the inhibitor and the enzyme, and generation of a small C-terminal fragment of the inhibitor due to cleavage at the reactive site by tissue kallikrein. The protein is Kallistatin (SERPINA4) of Homo sapiens (Human).